A 675-amino-acid chain; its full sequence is Heat shock 70 kDa protein, mitochondrial (675 aa).

The N-terminal 52 residues, 1 to 52 (MAATLLRSLQRRNLSSSSVSAFRSLTGSTKTSYATHKLASLTRPFSSRPAGN), are a transit peptide targeting the mitochondrion. The interval 639–675 (VSKIGQHMSGGSSGGPSEGGSQGGEQAPEAEYEEVKK) is disordered. Positions 649-661 (GSSGGPSEGGSQG) are enriched in gly residues. The segment covering 666–675 (PEAEYEEVKK) has biased composition (acidic residues).

Belongs to the heat shock protein 70 family.

It is found in the mitochondrion. The chain is Heat shock 70 kDa protein, mitochondrial (HSP1) from Pisum sativum (Garden pea).